A 561-amino-acid polypeptide reads, in one-letter code: Dihydroxy-acid dehydratase (561 aa).

Residue cysteine 50 participates in [2Fe-2S] cluster binding. Aspartate 82 is a binding site for Mg(2+). Cysteine 123 serves as a coordination point for [2Fe-2S] cluster. The Mg(2+) site is built by aspartate 124 and lysine 125. Lysine 125 carries the post-translational modification N6-carboxylysine. A [2Fe-2S] cluster-binding site is contributed by cysteine 195. Position 447 (glutamate 447) interacts with Mg(2+). The Proton acceptor role is filled by serine 473.

It belongs to the IlvD/Edd family. As to quaternary structure, homodimer. [2Fe-2S] cluster serves as cofactor. Requires Mg(2+) as cofactor.

The enzyme catalyses (2R)-2,3-dihydroxy-3-methylbutanoate = 3-methyl-2-oxobutanoate + H2O. The catalysed reaction is (2R,3R)-2,3-dihydroxy-3-methylpentanoate = (S)-3-methyl-2-oxopentanoate + H2O. Its pathway is amino-acid biosynthesis; L-isoleucine biosynthesis; L-isoleucine from 2-oxobutanoate: step 3/4. The protein operates within amino-acid biosynthesis; L-valine biosynthesis; L-valine from pyruvate: step 3/4. Its function is as follows. Functions in the biosynthesis of branched-chain amino acids. Catalyzes the dehydration of (2R,3R)-2,3-dihydroxy-3-methylpentanoate (2,3-dihydroxy-3-methylvalerate) into 2-oxo-3-methylpentanoate (2-oxo-3-methylvalerate) and of (2R)-2,3-dihydroxy-3-methylbutanoate (2,3-dihydroxyisovalerate) into 2-oxo-3-methylbutanoate (2-oxoisovalerate), the penultimate precursor to L-isoleucine and L-valine, respectively. This Acaryochloris marina (strain MBIC 11017) protein is Dihydroxy-acid dehydratase.